The chain runs to 407 residues: Na(+)-translocating NADH-quinone reductase subunit F (407 aa).

The chain crosses the membrane as a helical span at residues 3–23 (IILGVVMFTLIVLALVLVILF). Positions 32–126 (GDITISVNGD…DMDIELPEEI (95 aa)) constitute a 2Fe-2S ferredoxin-type domain. [2Fe-2S] cluster is bound by residues C69, C75, C78, and C110. Positions 129–269 (VKKWECTVIS…SGPFGEFFAK (141 aa)) constitute an FAD-binding FR-type domain. A catalytic region spans residues 272 to 389 (DAEMVFIGGG…PMMNAAVIGM (118 aa)).

The protein belongs to the NqrF family. In terms of assembly, composed of six subunits; NqrA, NqrB, NqrC, NqrD, NqrE and NqrF. [2Fe-2S] cluster serves as cofactor. It depends on FAD as a cofactor.

Its subcellular location is the cell inner membrane. The enzyme catalyses a ubiquinone + n Na(+)(in) + NADH + H(+) = a ubiquinol + n Na(+)(out) + NAD(+). In terms of biological role, NQR complex catalyzes the reduction of ubiquinone-1 to ubiquinol by two successive reactions, coupled with the transport of Na(+) ions from the cytoplasm to the periplasm. The first step is catalyzed by NqrF, which accepts electrons from NADH and reduces ubiquinone-1 to ubisemiquinone by a one-electron transfer pathway. The protein is Na(+)-translocating NADH-quinone reductase subunit F of Vibrio parahaemolyticus serotype O3:K6 (strain RIMD 2210633).